The following is a 469-amino-acid chain: Cold shock protein CS66 (469 aa).

Repeat copies occupy residues 9–31 (GEKKGIMEKIKEKLPGGHGDHKE), 49–62 (TGGAYGQEGHTGTT), 72–94 (GEKKGVMENIKDKLPGGHADHQQ), 95–108 (TGGTYGQQGHTGTA), 115–128 (TGGTYGQQGHTGTA), 135–148 (TNGTYGEHGHTGTA), 149–162 (TGGSYGEQRHTGVT), 170–192 (GEKKSLMENIKEKLPGGHGDNQQ), 193–206 (TAGTYGQQGHFATG), 213–226 (TGGTYGEQGHAGVT), 234–256 (GEKKGLMENIKDKLPGGHGDHQQ), 257–270 (TGGTYGQQGHTGAA), 277–290 (GGGTYEQHGHTGMT), 298–320 (GGKKGVMENIKDKLPGGHSDNQQ), 321–334 (TGGAYEQQGHTGAA), 341–354 (SGGTYEQHGHTGMT), 362–384 (GEKKAVMENIKDKLPGGHGDHQQ), 385–398 (TGGAYGQQGHTGTA), 405–418 (GGGTYEQHGNTGMT), 428–441 (TGGTHGQHGHTGTT), and 452–469 (GEKKSLMDKIKDKLPGQH). The tract at residues 9–390 (GEKKGIMEKI…DHQQTGGAYG (382 aa)) is 7 X 23 AA approximate repeats. A 14 X 14 AA approximate repeats region spans residues 49–441 (TGGAYGQEGH…HGQHGHTGTT (393 aa)). Residues 87–112 (GGHADHQQTGGTYGQQGHTGTATHGT) are disordered. Positions 93–112 (QQTGGTYGQQGHTGTATHGT) are enriched in low complexity. Positions 203 to 214 (FATGTHGTPATG) are enriched in low complexity. The tract at residues 203-469 (FATGTHGTPA…KIKDKLPGQH (267 aa)) is disordered. Residues 233 to 254 (TGEKKGLMENIKDKLPGGHGDH) show a composition bias toward basic and acidic residues. The span at 255-274 (QQTGGTYGQQGHTGAATHGT) shows a compositional bias: low complexity. The segment covering 288–301 (GMTGTGTHGTGGKK) has biased composition (gly residues). Over residues 302–312 (GVMENIKDKLP) the composition is skewed to basic and acidic residues. The segment covering 361-382 (TGEKKAVMENIKDKLPGGHGDH) has biased composition (basic and acidic residues). 2 stretches are compositionally biased toward low complexity: residues 383–402 (QQTGGAYGQQGHTGTATHGT) and 412–429 (HGNTGMTGTETHGTTATG). A compositionally biased stretch (gly residues) spans 439-450 (GTTGTGTHGTDG). Residues 451–469 (VGEKKSLMDKIKDKLPGQH) show a composition bias toward basic and acidic residues.

It belongs to the plant dehydrin family.

May reduce intracellular freezing damage during winter by hydrogen-bonding to the lattice of the nascent ice crystals, thus modifying the structure and/or propagation of ice crystals. The chain is Cold shock protein CS66 (CS66) from Triticum aestivum (Wheat).